The primary structure comprises 233 residues: Glucosamine-6-phosphate deaminase (233 aa).

The active-site Proton acceptor; for enolization step is aspartate 62. Asparagine 128 functions as the For ring-opening step in the catalytic mechanism. Histidine 130 serves as the catalytic Proton acceptor; for ring-opening step. Catalysis depends on glutamate 135, which acts as the For ring-opening step.

The protein belongs to the glucosamine/galactosamine-6-phosphate isomerase family. NagB subfamily.

The catalysed reaction is alpha-D-glucosamine 6-phosphate + H2O = beta-D-fructose 6-phosphate + NH4(+). It participates in amino-sugar metabolism; N-acetylneuraminate degradation; D-fructose 6-phosphate from N-acetylneuraminate: step 5/5. Functionally, catalyzes the reversible isomerization-deamination of glucosamine 6-phosphate (GlcN6P) to form fructose 6-phosphate (Fru6P) and ammonium ion. In Streptococcus thermophilus (strain ATCC BAA-491 / LMD-9), this protein is Glucosamine-6-phosphate deaminase.